Here is a 692-residue protein sequence, read N- to C-terminus: Elongation factor G (692 aa).

In terms of domain architecture, tr-type G spans 8-282 (EKVRNIGIAA…AVVDYLPAPS (275 aa)). GTP-binding positions include 17–24 (AHIDAGKT), 81–85 (DTPGH), and 135–138 (NKMD).

It belongs to the TRAFAC class translation factor GTPase superfamily. Classic translation factor GTPase family. EF-G/EF-2 subfamily.

The protein localises to the cytoplasm. In terms of biological role, catalyzes the GTP-dependent ribosomal translocation step during translation elongation. During this step, the ribosome changes from the pre-translocational (PRE) to the post-translocational (POST) state as the newly formed A-site-bound peptidyl-tRNA and P-site-bound deacylated tRNA move to the P and E sites, respectively. Catalyzes the coordinated movement of the two tRNA molecules, the mRNA and conformational changes in the ribosome. This chain is Elongation factor G, found in Nostoc punctiforme (strain ATCC 29133 / PCC 73102).